Consider the following 357-residue polypeptide: DNA integrity scanning protein DisA (357 aa).

The region spanning 3 to 141 (RPTLRETVAR…GGERHVVADS (139 aa)) is the DAC domain. Residues glycine 70, leucine 88, and 101 to 105 (TRHRS) each bind ATP.

It belongs to the DisA family. As to quaternary structure, homooctamer. It depends on Mg(2+) as a cofactor.

It carries out the reaction 2 ATP = 3',3'-c-di-AMP + 2 diphosphate. Functionally, participates in a DNA-damage check-point. DisA forms globular foci that rapidly scan along the chromosomes searching for lesions. Also has diadenylate cyclase activity, catalyzing the condensation of 2 ATP molecules into cyclic di-AMP (c-di-AMP). c-di-AMP likely acts as a signaling molecule that may couple DNA integrity with a cellular process. The protein is DNA integrity scanning protein DisA of Mycolicibacterium paratuberculosis (strain ATCC BAA-968 / K-10) (Mycobacterium paratuberculosis).